Here is a 1047-residue protein sequence, read N- to C-terminus: MAVTLDKDAYYRRVKRLYSNWRKGEDEYANVDAIVVSVGVDEEIVYAKSTALQTWLFGYELTDTIMVFCDDKIIFMASKKKVEFLKQIANTKGNENANGAPAITLLIREKNESNKSSFDKMIEAIKESKNGKKIGVFSKDKFPGEFMKSWNDCLNKEGFDKIDISAVVAYTIAVKEDGELNLMKKAASITSEVFNKFFKERVMEIVDADEKVRHSKLAESVEKAIEEKKYLAGADPSTVEMCYPPIIQSGGNYNLKFSVVSDKNHMHFGAITCAMGIRFKSYCSNLVRTLMVDPSQEVQENYNFLLQLQEELLKELRHGVKICDVYNAVMDVVKKQKPELLNKITKNLGFGMGIEFREGSLVINSKNQYKLKKGMVFSINLGFSDLTNKEGKKPEEKTYALFIGDTVLVDEDGPATVLTSVKKKVKNVGIFLKNEDEEEEEEEKDEAEDLLGRGSRAALLTERTRNEMTAEEKRRAHQKELAAQLNEEAKRRLTEQKGEQQIQKARKSNVSYKNPSLMPKEPHIREMKIYIDKKYETVIMPVFGIATPFHIATIKNISMSVEGDYTYLRINFYCPGSALGRNEGNIFPNPEATFVKEITYRASNIKAPGEQTVPALNLQNAFRIIKEVQKRYKTREAEEKEKEGIVKQDSLVINLNRSNPKLKDLYIRPNIAQKRMQGSLEAHVNGFRFTSVRGDKVDILYNNIKHALFQPCDGEMIIVLHFHLKNAIMFGKKRHTDVQFYTEVGEITTDLGKHQHMHDRDDLYAEQMEREMRHKLKTAFKNFIEKVEALTKEELEFEVPFRDLGFNGAPYRSTCLLQPTSSALVNATEWPPFVVTLDEVELIHFERVQFHLKNFDMVIVYKDYSKKVTMINAIPVASLDPIKEWLNSCDLKYTEGVQSLNWTKIMKTIVDDPEGFFEQGGWSFLEPEGEGSDAEEGDSESEIEDETFNPSEDDYEEEEEDSDEDYSSEAEESDYSKESLGSEEESGKDWDELEEEARKADRESRYEEEEEQSRSMSRKRKASVHSSGRGSNRGSRHSSAPPKKKRK.

Alanine 2 bears the N-acetylalanine mark. Residue lysine 139 is modified to N6-acetyllysine. At serine 188 the chain carries Phosphoserine. N6-acetyllysine is present on residues lysine 196 and lysine 223. Residues 432–507 (LKNEDEEEEE…GEQQIQKARK (76 aa)) adopt a coiled-coil conformation. Phosphoserine is present on serine 455. A disordered region spans residues 492–518 (RLTEQKGEQQIQKARKSNVSYKNPSLM). A Glycyl lysine isopeptide (Lys-Gly) (interchain with G-Cter in SUMO2) cross-link involves residue lysine 497. The span at 499-514 (EQQIQKARKSNVSYKN) shows a compositional bias: polar residues. Serine 508 is subject to Phosphoserine. Residue lysine 513 is modified to N6-acetyllysine; alternate. Lysine 513 participates in a covalent cross-link: Glycyl lysine isopeptide (Lys-Gly) (interchain with G-Cter in SUMO2); alternate. Lysine 647 is covalently cross-linked (Glycyl lysine isopeptide (Lys-Gly) (interchain with G-Cter in SUMO2)). 2 positions are modified to phosphoserine: serine 650 and serine 658. Lysine 732 and lysine 786 each carry N6-acetyllysine. Threonine 903 is subject to Phosphothreonine. N6-acetyllysine is present on lysine 904. The interval 918–1047 (EQGGWSFLEP…SSAPPKKKRK (130 aa)) is disordered. Residues 927–973 (PEGEGSDAEEGDSESEIEDETFNPSEDDYEEEEEDSDEDYSSEAEES) are compositionally biased toward acidic residues. Serine 979, serine 982, serine 986, and serine 1015 each carry phosphoserine. Residues 985–1005 (ESGKDWDELEEEARKADRESR) show a composition bias toward basic and acidic residues. The segment covering 1024 to 1039 (VHSSGRGSNRGSRHSS) has biased composition (low complexity).

The protein belongs to the peptidase M24 family. SPT16 subfamily. Interacts with MYOG (via C-terminal region). Component of the FACT complex, a stable heterodimer of SSRP1 and SUPT16H. Also a component of a CK2-SPT16-SSRP1 complex which forms following UV irradiation, composed of SSRP1, SUPT16H, CSNK2A1, CSNK2A2 and CSNK2B. Interacts with NEK9. Binds to histone H2A-H2B. Identified in a centromere complex containing histones H2A, H2B and H4, and at least CENPA, CENPB, CENPC, CENPT, CENPN, HJURP, SUPT16H, SSRP1 and RSF1. Interacts with GTF2E2. As to quaternary structure, (Microbial infection) Interacts with Herpes simplex virus 1 (HHV-1) protein ICP22; this interaction relocalizes the FACT complex to viral genomes in infected cells. In terms of processing, ADP-ribosylated. ADP-ribosylation by PARP1 is induced by genotoxic stress and correlates with dissociation of FACT from chromatin. Ubiquitous.

It localises to the nucleus. Its subcellular location is the chromosome. Its function is as follows. Component of the FACT complex, a general chromatin factor that acts to reorganize nucleosomes. The FACT complex is involved in multiple processes that require DNA as a template such as mRNA elongation, DNA replication and DNA repair. During transcription elongation the FACT complex acts as a histone chaperone that both destabilizes and restores nucleosomal structure. It facilitates the passage of RNA polymerase II and transcription by promoting the dissociation of one histone H2A-H2B dimer from the nucleosome, then subsequently promotes the reestablishment of the nucleosome following the passage of RNA polymerase II. The FACT complex is probably also involved in phosphorylation of 'Ser-392' of p53/TP53 via its association with CK2 (casein kinase II). This Homo sapiens (Human) protein is FACT complex subunit SPT16 (SUPT16H).